The sequence spans 408 residues: Imidazolonepropionase (408 aa).

His-73 and His-75 together coordinate Fe(3+). Positions 73 and 75 each coordinate Zn(2+). Residues Arg-82, Tyr-145, and His-178 each coordinate 4-imidazolone-5-propanoate. Tyr-145 lines the N-formimidoyl-L-glutamate pocket. His-243 provides a ligand contact to Fe(3+). Residue His-243 participates in Zn(2+) binding. Gln-246 is a binding site for 4-imidazolone-5-propanoate. Residue Asp-318 participates in Fe(3+) binding. Asp-318 is a binding site for Zn(2+). Residues Asn-320 and Gly-322 each coordinate N-formimidoyl-L-glutamate. Ser-323 provides a ligand contact to 4-imidazolone-5-propanoate.

The protein belongs to the metallo-dependent hydrolases superfamily. HutI family. The cofactor is Zn(2+). Fe(3+) is required as a cofactor.

It localises to the cytoplasm. It carries out the reaction 4-imidazolone-5-propanoate + H2O = N-formimidoyl-L-glutamate. The protein operates within amino-acid degradation; L-histidine degradation into L-glutamate; N-formimidoyl-L-glutamate from L-histidine: step 3/3. Its function is as follows. Catalyzes the hydrolytic cleavage of the carbon-nitrogen bond in imidazolone-5-propanoate to yield N-formimidoyl-L-glutamate. It is the third step in the universal histidine degradation pathway. This is Imidazolonepropionase from Shewanella piezotolerans (strain WP3 / JCM 13877).